The chain runs to 207 residues: Dephospho-CoA kinase (207 aa).

The region spanning 4-203 is the DPCK domain; the sequence is VIGLTGGIAS…EEGYIEKPNY (200 aa). Residue 12-17 coordinates ATP; that stretch reads ASGKST.

It belongs to the CoaE family.

Its subcellular location is the cytoplasm. The enzyme catalyses 3'-dephospho-CoA + ATP = ADP + CoA + H(+). Its pathway is cofactor biosynthesis; coenzyme A biosynthesis; CoA from (R)-pantothenate: step 5/5. In terms of biological role, catalyzes the phosphorylation of the 3'-hydroxyl group of dephosphocoenzyme A to form coenzyme A. In Staphylococcus aureus (strain MRSA252), this protein is Dephospho-CoA kinase.